A 328-amino-acid chain; its full sequence is scyllo-inositol 2-dehydrogenase (NADP(+)) IolU (328 aa).

It belongs to the Gfo/Idh/MocA family.

The enzyme catalyses scyllo-inositol + NADP(+) = scyllo-inosose + NADPH + H(+). Its function is as follows. Catalyzes the NADPH-dependent reduction of scyllo-inosose (SIS) to scyllo-inositol (SI) in vitro, but is unable to dehydrogenate scyllo-inositol and myo-inositol. Is less efficient than the functional paralog IolW. Under physiological conditions, may primarily function as an NADPH-dependent oxidoreductase that reduces carbonyl group(s) in its substrates. Cannot use NADH instead of NADPH. This is scyllo-inositol 2-dehydrogenase (NADP(+)) IolU from Bacillus subtilis (strain 168).